The sequence spans 139 residues: Large ribosomal subunit protein bL17 (139 aa).

It belongs to the bacterial ribosomal protein bL17 family. As to quaternary structure, part of the 50S ribosomal subunit. Contacts protein L32.

The sequence is that of Large ribosomal subunit protein bL17 from Cereibacter sphaeroides (strain ATCC 17025 / ATH 2.4.3) (Rhodobacter sphaeroides).